The chain runs to 1034 residues: Glycine dehydrogenase (decarboxylating), mitochondrial (1034 aa).

The transit peptide at 1 to 63 (MERARRLAML…LNGFGSQVRT (63 aa)) directs the protein to the mitochondrion. Lys-770 carries the N6-(pyridoxal phosphate)lysine modification.

It belongs to the GcvP family. Homodimer. The glycine cleavage system is composed of four proteins: P, T, L and H. The cofactor is pyridoxal 5'-phosphate.

The protein resides in the mitochondrion. It carries out the reaction N(6)-[(R)-lipoyl]-L-lysyl-[glycine-cleavage complex H protein] + glycine + H(+) = N(6)-[(R)-S(8)-aminomethyldihydrolipoyl]-L-lysyl-[glycine-cleavage complex H protein] + CO2. In terms of biological role, the glycine cleavage system catalyzes the degradation of glycine. The P protein binds the alpha-amino group of glycine through its pyridoxal phosphate cofactor; CO(2) is released and the remaining methylamine moiety is then transferred to the lipoamide cofactor of the H protein. The chain is Glycine dehydrogenase (decarboxylating), mitochondrial (GDCSPA) from Flaveria trinervia (Clustered yellowtops).